Reading from the N-terminus, the 182-residue chain is Ribosome-recycling factor (182 aa).

It belongs to the RRF family.

It localises to the cytoplasm. Responsible for the release of ribosomes from messenger RNA at the termination of protein biosynthesis. May increase the efficiency of translation by recycling ribosomes from one round of translation to another. This is Ribosome-recycling factor from Synechocystis sp. (strain ATCC 27184 / PCC 6803 / Kazusa).